The sequence spans 540 residues: Phosphoenolpyruvate carboxykinase (ATP) (540 aa).

Arginine 65 provides a ligand contact to substrate. Lysine 87 is subject to N6-acetyllysine. Substrate is bound by residues tyrosine 207 and lysine 213. Residues lysine 213, histidine 232, and 248-256 contribute to the ATP site; that span reads GLSGTGKTT. Mn(2+) is bound by residues lysine 213 and histidine 232. A Mn(2+)-binding site is contributed by aspartate 269. Residues glutamate 297, arginine 333, 449-450, and threonine 455 contribute to the ATP site; that span reads RI. Arginine 333 contacts substrate. Lysine 523 is subject to N6-acetyllysine.

The protein belongs to the phosphoenolpyruvate carboxykinase (ATP) family. Monomer. Mn(2+) serves as cofactor.

It is found in the cytoplasm. It catalyses the reaction oxaloacetate + ATP = phosphoenolpyruvate + ADP + CO2. Its pathway is carbohydrate biosynthesis; gluconeogenesis. Functionally, involved in the gluconeogenesis. Catalyzes the conversion of oxaloacetate (OAA) to phosphoenolpyruvate (PEP) through direct phosphoryl transfer between the nucleoside triphosphate and OAA. In Shigella flexneri serotype 5b (strain 8401), this protein is Phosphoenolpyruvate carboxykinase (ATP).